Consider the following 549-residue polypeptide: CTP synthase (549 aa).

The tract at residues 1-267 (MAKFVFITGG…CREVLDVLNL (267 aa)) is amidoligase domain. Serine 13 contacts CTP. Serine 13 contacts UTP. ATP-binding positions include 14 to 19 (SIGKGI) and aspartate 71. 2 residues coordinate Mg(2+): aspartate 71 and glutamate 141. CTP is bound by residues 148–150 (DIE), 188–193 (KTKPTQ), and lysine 224. UTP is bound by residues 188–193 (KTKPTQ) and lysine 224. Residues 292–534 (KIALVGKYVQ…IEAAQQRLPD (243 aa)) enclose the Glutamine amidotransferase type-1 domain. Glycine 354 provides a ligand contact to L-glutamine. The active-site Nucleophile; for glutamine hydrolysis is cysteine 381. Residues 382-385 (LGMQ), glutamate 405, and arginine 462 each bind L-glutamine. Active-site residues include histidine 507 and glutamate 509.

This sequence belongs to the CTP synthase family. In terms of assembly, homotetramer.

It carries out the reaction UTP + L-glutamine + ATP + H2O = CTP + L-glutamate + ADP + phosphate + 2 H(+). It catalyses the reaction L-glutamine + H2O = L-glutamate + NH4(+). The enzyme catalyses UTP + NH4(+) + ATP = CTP + ADP + phosphate + 2 H(+). It participates in pyrimidine metabolism; CTP biosynthesis via de novo pathway; CTP from UDP: step 2/2. With respect to regulation, allosterically activated by GTP, when glutamine is the substrate; GTP has no effect on the reaction when ammonia is the substrate. The allosteric effector GTP functions by stabilizing the protein conformation that binds the tetrahedral intermediate(s) formed during glutamine hydrolysis. Inhibited by the product CTP, via allosteric rather than competitive inhibition. Its function is as follows. Catalyzes the ATP-dependent amination of UTP to CTP with either L-glutamine or ammonia as the source of nitrogen. Regulates intracellular CTP levels through interactions with the four ribonucleotide triphosphates. The polypeptide is CTP synthase (Synechococcus sp. (strain CC9605)).